Consider the following 361-residue polypeptide: UDP-3-O-acylglucosamine N-acyltransferase (361 aa).

Residue H258 is the Proton acceptor of the active site.

Belongs to the transferase hexapeptide repeat family. LpxD subfamily. As to quaternary structure, homotrimer.

The catalysed reaction is a UDP-3-O-[(3R)-3-hydroxyacyl]-alpha-D-glucosamine + a (3R)-hydroxyacyl-[ACP] = a UDP-2-N,3-O-bis[(3R)-3-hydroxyacyl]-alpha-D-glucosamine + holo-[ACP] + H(+). Its pathway is bacterial outer membrane biogenesis; LPS lipid A biosynthesis. Its function is as follows. Catalyzes the N-acylation of UDP-3-O-acylglucosamine using 3-hydroxyacyl-ACP as the acyl donor. Is involved in the biosynthesis of lipid A, a phosphorylated glycolipid that anchors the lipopolysaccharide to the outer membrane of the cell. This is UDP-3-O-acylglucosamine N-acyltransferase from Nitrobacter hamburgensis (strain DSM 10229 / NCIMB 13809 / X14).